Reading from the N-terminus, the 1035-residue chain is GRB10-interacting GYF protein 1 (1035 aa).

Residues Ser24, Ser28, Ser137, and Ser157 each carry the phosphoserine modification. The segment at 105-422 (KGAGPPLAGT…AGPPGDLEDD (318 aa)) is disordered. Composition is skewed to basic and acidic residues over residues 148–179 (SPRE…RCGF) and 186–203 (PRKE…SLRE). Ser230 is subject to Phosphoserine. The segment covering 239–267 (GWREHGERRRKFEFDLRGDRGGCGEEEGR) has biased composition (basic and acidic residues). 2 stretches are compositionally biased toward acidic residues: residues 295–304 (CLDDEDEEMG) and 324–349 (PEEQ…EEGP). Ser341 carries the phosphoserine modification. The segment covering 367 to 378 (SSPSPLPTLGPL) has biased composition (low complexity). The span at 388–401 (TAEKEPPAAEDDIR) shows a compositional bias: basic and acidic residues. Position 406 is a phosphoserine (Ser406). Low complexity predominate over residues 406 to 417 (SPGVGSSAGPPG). Residues 474 to 522 (ARKWFYKDPQGEIQGPFTTQEMAEWFQAGYFSMSLLVKRGCDEGFQPLG) form the GYF domain. 2 positions are modified to phosphoserine: Ser538 and Ser638. Disordered regions lie at residues 621 to 640 (PPRG…LSVP), 696 to 724 (KREE…QEEE), and 825 to 879 (WGGP…RPIR). Residues 629 to 639 (LLPTMSRSLSV) show a composition bias toward polar residues. Positions 696-722 (KREEEERKRREEKRRQQQQEEQKRRQE) are enriched in basic and acidic residues. Residues 857 to 874 (LKNSRSSPSLSDSYSHLS) are compositionally biased toward low complexity. Phosphoserine is present on Ser862.

Belongs to the GIGYF family. In terms of assembly, interacts with GRB10. This transient binding is increased under IGF1 stimulation and leads to recruitment of GIGYF1/GRB10 complex to IGF1 receptor. Interacts with DDX6.

Its function is as follows. May act cooperatively with GRB10 to regulate tyrosine kinase receptor signaling. May increase IGF1 receptor phosphorylation under IGF1 stimulation as well as phosphorylation of IRS1 and SHC1. This Homo sapiens (Human) protein is GRB10-interacting GYF protein 1 (GIGYF1).